We begin with the raw amino-acid sequence, 166 residues long: Small ribosomal subunit protein uS5 (166 aa).

The region spanning 11 to 74 (LREKLVAINR…EKARANMKRV (64 aa)) is the S5 DRBM domain.

Belongs to the universal ribosomal protein uS5 family. In terms of assembly, part of the 30S ribosomal subunit. Contacts proteins S4 and S8.

Functionally, with S4 and S12 plays an important role in translational accuracy. Located at the back of the 30S subunit body where it stabilizes the conformation of the head with respect to the body. The chain is Small ribosomal subunit protein uS5 from Alkalilimnicola ehrlichii (strain ATCC BAA-1101 / DSM 17681 / MLHE-1).